A 41-amino-acid chain; its full sequence is Pi-stichotoxin-Hcr5a (41 aa).

3 disulfide bridges follow: C4–C37, C6–C30, and C20–C38.

Belongs to the sea anemone type 3 (BDS) potassium channel toxin family.

Its subcellular location is the secreted. The protein localises to the nematocyst. Weakly inhibits human homomeric ASIC3 (IC(50)=5.5 uM). This is Pi-stichotoxin-Hcr5a from Radianthus crispa (Leathery sea anemone).